Here is a 323-residue protein sequence, read N- to C-terminus: Ferrochelatase (323 aa).

Fe cation-binding residues include histidine 196 and glutamate 277.

It belongs to the ferrochelatase family.

It localises to the cytoplasm. The enzyme catalyses heme b + 2 H(+) = protoporphyrin IX + Fe(2+). Its pathway is porphyrin-containing compound metabolism; protoheme biosynthesis; protoheme from protoporphyrin-IX: step 1/1. In terms of biological role, catalyzes the ferrous insertion into protoporphyrin IX. The polypeptide is Ferrochelatase (Haemophilus influenzae (strain ATCC 51907 / DSM 11121 / KW20 / Rd)).